Reading from the N-terminus, the 299-residue chain is GTPase Era (299 aa).

An Era-type G domain is found at 4–171 (KSGFVAILGR…VDILSENLDE (168 aa)). Residues 12 to 19 (GRPNVGKS) form a G1 region. A GTP-binding site is contributed by 12–19 (GRPNVGKS). Positions 38 to 42 (XTTRN) are G2. The tract at residues 59–62 (DTPG) is G3. GTP-binding positions include 59–63 (DTPGI) and 121–124 (NKID). The tract at residues 121 to 124 (NKID) is G4. Residues 150-152 (ISA) are G5. The KH type-2 domain occupies 202 to 280 (TREEIPHSVA…FLETWVKVKK (79 aa)).

Belongs to the TRAFAC class TrmE-Era-EngA-EngB-Septin-like GTPase superfamily. Era GTPase family. In terms of assembly, monomer.

Its subcellular location is the cytoplasm. The protein resides in the cell membrane. Functionally, an essential GTPase that binds both GDP and GTP, with rapid nucleotide exchange. Plays a role in 16S rRNA processing and 30S ribosomal subunit biogenesis and possibly also in cell cycle regulation and energy metabolism. The polypeptide is GTPase Era (Streptococcus pneumoniae serotype 19F (strain G54)).